A 238-amino-acid chain; its full sequence is Uridylate kinase (238 aa).

12-15 (KLSG) contributes to the ATP binding site. Residue Gly-54 coordinates UMP. 2 residues coordinate ATP: Gly-55 and Arg-59. Residues Asp-74 and 135-142 (TGNPFFTT) each bind UMP. Residues Thr-162, Tyr-168, and Asp-171 each contribute to the ATP site.

It belongs to the UMP kinase family. Homohexamer.

It is found in the cytoplasm. It carries out the reaction UMP + ATP = UDP + ADP. It participates in pyrimidine metabolism; CTP biosynthesis via de novo pathway; UDP from UMP (UMPK route): step 1/1. Its activity is regulated as follows. Inhibited by UTP. In terms of biological role, catalyzes the reversible phosphorylation of UMP to UDP. The sequence is that of Uridylate kinase from Janthinobacterium sp. (strain Marseille) (Minibacterium massiliensis).